The sequence spans 249 residues: Isoprenyl transferase (249 aa).

The active site involves aspartate 25. Residue aspartate 25 coordinates Mg(2+). Substrate contacts are provided by residues 26 to 29 (GNGR), tryptophan 30, arginine 38, histidine 42, and 70 to 72 (STE). Catalysis depends on asparagine 73, which acts as the Proton acceptor. Residues tryptophan 74, arginine 76, arginine 197, and 203-205 (RLS) each bind substrate. Glutamate 216 contacts Mg(2+).

This sequence belongs to the UPP synthase family. In terms of assembly, homodimer. Mg(2+) serves as cofactor.

Functionally, catalyzes the condensation of isopentenyl diphosphate (IPP) with allylic pyrophosphates generating different type of terpenoids. In Streptococcus pyogenes serotype M1, this protein is Isoprenyl transferase.